A 363-amino-acid chain; its full sequence is 3-isopropylmalate dehydrogenase (363 aa).

Residue 79-92 (GPKWEHLPPNEQPE) coordinates NAD(+). 4 residues coordinate substrate: Arg-100, Arg-110, Arg-139, and Asp-228. The Mg(2+) site is built by Asp-228, Asp-252, and Asp-256. 286–298 (GSAPDIAGKNIAN) contributes to the NAD(+) binding site.

The protein belongs to the isocitrate and isopropylmalate dehydrogenases family. LeuB type 1 subfamily. As to quaternary structure, homodimer. Requires Mg(2+) as cofactor. Mn(2+) is required as a cofactor.

The protein localises to the cytoplasm. It catalyses the reaction (2R,3S)-3-isopropylmalate + NAD(+) = 4-methyl-2-oxopentanoate + CO2 + NADH. The protein operates within amino-acid biosynthesis; L-leucine biosynthesis; L-leucine from 3-methyl-2-oxobutanoate: step 3/4. Functionally, catalyzes the oxidation of 3-carboxy-2-hydroxy-4-methylpentanoate (3-isopropylmalate) to 3-carboxy-4-methyl-2-oxopentanoate. The product decarboxylates to 4-methyl-2 oxopentanoate. This Vibrio cholerae serotype O1 (strain ATCC 39315 / El Tor Inaba N16961) protein is 3-isopropylmalate dehydrogenase.